A 158-amino-acid polypeptide reads, in one-letter code: C-type lectin (158 aa).

The N-terminal stretch at 1–23 (MWQFTVVSLGWLAVFLSLSGAKG) is a signal peptide. Cystine bridges form between cysteine 26-cysteine 37, cysteine 54-cysteine 154, and cysteine 129-cysteine 146. The region spanning 33 to 155 (RNGVCNKLFP…CASLHPFICQ (123 aa)) is the C-type lectin domain. The Mannose-binding signature appears at 119 to 121 (EPN). Positions 127, 142, and 143 each coordinate Ca(2+).

Belongs to the true venom lectin family. As to expression, expressed by the venom gland.

The protein resides in the secreted. Mannose-binding lectin which recognizes specific carbohydrate structures and agglutinates a variety of animal cells by binding to cell-surface glycoproteins and glycolipids. May be a calcium-dependent lectin. The sequence is that of C-type lectin from Cerberus rynchops (Dog-faced water snake).